A 230-amino-acid chain; its full sequence is ATP synthase subunit a (230 aa).

5 consecutive transmembrane segments (helical) span residues 17-37 (LPITQSVLTTWFIMISLFIMA), 78-98 (IFPFVATLWIFILVSNLIGVI), 107-127 (DLSVTASLAIMTFLSVHWFGI), 165-187 (LFGNIMSLQLTALIVLMIAGFLV), and 198-218 (EAIIQAYIFGMLALIYIAGGI).

It belongs to the ATPase A chain family. In terms of assembly, F-type ATPases have 2 components, CF(1) - the catalytic core - and CF(0) - the membrane proton channel. CF(1) has five subunits: alpha(3), beta(3), gamma(1), delta(1), epsilon(1). CF(0) has three main subunits: a(1), b(2) and c(9-12). The alpha and beta chains form an alternating ring which encloses part of the gamma chain. CF(1) is attached to CF(0) by a central stalk formed by the gamma and epsilon chains, while a peripheral stalk is formed by the delta and b chains.

Its subcellular location is the cell inner membrane. Key component of the proton channel; it plays a direct role in the translocation of protons across the membrane. This Legionella pneumophila (strain Paris) protein is ATP synthase subunit a.